The sequence spans 501 residues: Glycerol kinase (501 aa).

Threonine 17 contacts ADP. ATP-binding residues include threonine 17, threonine 18, and serine 19. Threonine 17 lines the sn-glycerol 3-phosphate pocket. Arginine 21 lines the ADP pocket. Residues arginine 87, glutamate 88, tyrosine 139, and aspartate 243 each contribute to the sn-glycerol 3-phosphate site. The glycerol site is built by arginine 87, glutamate 88, tyrosine 139, aspartate 243, and glutamine 244. ADP-binding residues include threonine 265 and glycine 308. The ATP site is built by threonine 265, glycine 308, glutamine 312, and glycine 409. The ADP site is built by glycine 409 and asparagine 413.

This sequence belongs to the FGGY kinase family.

It carries out the reaction glycerol + ATP = sn-glycerol 3-phosphate + ADP + H(+). It participates in polyol metabolism; glycerol degradation via glycerol kinase pathway; sn-glycerol 3-phosphate from glycerol: step 1/1. Its activity is regulated as follows. Inhibited by fructose 1,6-bisphosphate (FBP). In terms of biological role, key enzyme in the regulation of glycerol uptake and metabolism. Catalyzes the phosphorylation of glycerol to yield sn-glycerol 3-phosphate. This Pseudomonas fluorescens (strain SBW25) protein is Glycerol kinase.